Reading from the N-terminus, the 49-residue chain is DNA-directed RNA polymerase subunit Rpo12 (49 aa).

Cysteine 11, cysteine 27, and cysteine 30 together coordinate Zn(2+).

The protein belongs to the archaeal Rpo12/eukaryotic RPC10 RNA polymerase subunit family. Part of the RNA polymerase complex. The cofactor is Zn(2+).

Its subcellular location is the cytoplasm. It carries out the reaction RNA(n) + a ribonucleoside 5'-triphosphate = RNA(n+1) + diphosphate. Its function is as follows. DNA-dependent RNA polymerase (RNAP) catalyzes the transcription of DNA into RNA using the four ribonucleoside triphosphates as substrates. The polypeptide is DNA-directed RNA polymerase subunit Rpo12 (Pyrococcus furiosus (strain ATCC 43587 / DSM 3638 / JCM 8422 / Vc1)).